The primary structure comprises 87 residues: Glutaredoxin (87 aa).

The 87-residue stretch at 1-87 folds into the Glutaredoxin domain; the sequence is MFKVYGYDSN…GFDQLREYFK (87 aa). Cysteine 14 and cysteine 17 are oxidised to a cystine.

It belongs to the glutaredoxin family.

In terms of biological role, serves as a reducing agent for the phage-induced ribonucleotide reductase, but not for the bacterial ones. This specificity may be the result of sequence differences around the redox-active disulfide bond. The oxidized form accepts electrons from bacterial glutathione and will, in turn, reduce other small disulfides. Can also be reduced by NADPH and by bacterial thioredoxin reductase. This Enterobacteria phage T4 (Bacteriophage T4) protein is Glutaredoxin (NRDC).